The primary structure comprises 1940 residues: Rho GTPase-activating protein 32 (1940 aa).

Positions 154–248 constitute a PX; atypical domain; sequence SKELVFLVQI…LTWMEIDNKG (95 aa). Residues 262–324 form the SH3 domain; that stretch reads PAIAAAHVIK…PSECVELIND (63 aa). Residues 375–570 form the Rho-GAP domain; the sequence is CDLGEHLLNS…FILNHVEVLF (196 aa). 5 disordered regions span residues 646 to 746, 1035 to 1163, 1219 to 1264, 1430 to 1454, and 1675 to 1786; these read FPSE…LSAS, RANQ…FSVT, FTTG…PPVR, KHPR…YTED, and RSRS…HSSA. Over residues 1047-1061 the composition is skewed to polar residues; that stretch reads PQGASASESPQELSH. Low complexity-rich tracts occupy residues 1081-1094 and 1145-1163; these read LALA…QASA and SRKT…FSVT. Over residues 1691-1707 the composition is skewed to basic and acidic residues; that stretch reads ETKDVRYPGRTEGDERT. Polar residues predominate over residues 1725–1734; that stretch reads PQKQSGSSRS. Residues 1736-1755 show a composition bias toward basic and acidic residues; that stretch reads MQHDISTEQHSQDTLHRQPS.

It belongs to the PX domain-containing GAP family.

It localises to the cytoplasm. It is found in the membrane. The protein localises to the cell membrane. Functionally, GTPase-activating protein (GAP) promoting GTP hydrolysis on RHOA, CDC42 and RAC1 small GTPases. This chain is Rho GTPase-activating protein 32 (arhgap32), found in Xenopus laevis (African clawed frog).